The following is a 359-amino-acid chain: Lipopolysaccharide 1,6-galactosyltransferase (359 aa).

Gln242 and Glu274 together coordinate UDP.

The protein belongs to the glycosyltransferase group 1 family. Glycosyltransferase 4 subfamily.

The enzyme catalyses alpha-D-Glc-(1-&gt;3)-[L-alpha-D-Hep-(1-&gt;7)]-4-O-PO3(2-)-L-alpha-D-Hep-(1-&gt;3)-4-O-PO3(2-)-L-alpha-D-Hep-(1-&gt;5)-[alpha-Kdo-(2-&gt;4)]-alpha-Kdo-(2-&gt;6)-lipid A + UDP-alpha-D-galactose = alpha-D-Gal-(1-&gt;6)-alpha-D-Glc-(1-&gt;3)-[L-alpha-D-Hep-(1-&gt;7)]-4-O-PO3(2-)-L-alpha-D-Hep-(1-&gt;3)-4-O-PO3(2-)-L-alpha-D-Hep-(1-&gt;5)-[alpha-Kdo-(2-&gt;4)]-alpha-Kdo-(2-&gt;6)-lipid A + UDP + H(+). The protein operates within bacterial outer membrane biogenesis; LPS core biosynthesis. Its function is as follows. Galactosyltransferase involved in the biosynthesis of the core oligosaccharide region of lipopolysaccharide (LPS). Catalyzes the addition of galactose from UDP-galactose to the first glucose residue of the LPS outer core. Cannot use other sugar donors, such as UDP-glucose, UDP-glucuronic acid, UDP-galacuronic acid, GDP-mannose, ADP-glucose and GDP-glucose. In the absence of a lipid acceptor, can hydrolyze UDP-galactose to UDP and galactose. The polypeptide is Lipopolysaccharide 1,6-galactosyltransferase (Escherichia coli (strain K12)).